A 483-amino-acid chain; its full sequence is uncharacterized protein (483 aa).

Its subcellular location is the nucleus. It localises to the mitochondrion. This is an uncharacterized protein from Saccharomyces cerevisiae (strain ATCC 204508 / S288c) (Baker's yeast).